The following is a 762-amino-acid chain: cGMP-dependent protein kinase 2 (762 aa).

Positions M1 to A25 are disordered. G2 carries N-myristoyl glycine lipidation. Residues T23–V85 adopt a coiled-coil conformation. Residues S110 and S117 each carry the phosphoserine modification. The interval S117–K138 is disordered. Positions F168 to S283 are cGMP-binding, high affinity; cAMP-binding, moderate affinity. 3',5'-cyclic AMP-binding positions include G232–A235 and R242–T243. Residues G232 to A235, R242 to T243, K347, G356 to A359, R366 to S367, D412, and R415 each bind 3',5'-cyclic GMP. The tract at residues L286–H416 is cGMP-binding, high affinity; cAMP-binding, low affinity. S431 is subject to Phosphoserine. Residues L453–L711 form the Protein kinase domain. Residues L459 to V467 and K482 contribute to the ATP site. Residue D576 is the Proton acceptor of the active site. Phosphothreonine is present on T609. The 51-residue stretch at N712 to F762 folds into the AGC-kinase C-terminal domain. The disordered stretch occupies residues Y740–F762.

Belongs to the protein kinase superfamily. AGC Ser/Thr protein kinase family. cGMP subfamily. Interacts with GRIA1/GLUR1. Post-translationally, myristoylation mediates membrane localization. Highly concentrated in brain, lung and intestinal mucosa.

The protein localises to the apical cell membrane. The enzyme catalyses L-seryl-[protein] + ATP = O-phospho-L-seryl-[protein] + ADP + H(+). The catalysed reaction is L-threonyl-[protein] + ATP = O-phospho-L-threonyl-[protein] + ADP + H(+). Its activity is regulated as follows. Binding of cGMP results in enzyme activation. In terms of biological role, crucial regulator of intestinal secretion and bone growth. Phosphorylates and activates CFTR on the plasma membrane. Plays a key role in intestinal secretion by regulating cGMP-dependent translocation of CFTR in jejunum. Acts downstream of NMDAR to activate the plasma membrane accumulation of GRIA1/GLUR1 in synapse and increase synaptic plasticity. Phosphorylates GRIA1/GLUR1 at Ser-863. Acts as a regulator of gene expression and activator of the extracellular signal-regulated kinases MAPK3/ERK1 and MAPK1/ERK2 in mechanically stimulated osteoblasts. Under fluid shear stress, mediates ERK activation and subsequent induction of FOS, FOSL1/FRA1, FOSL2/FRA2 and FOSB that play a key role in the osteoblast anabolic response to mechanical stimulation. The polypeptide is cGMP-dependent protein kinase 2 (PRKG2) (Homo sapiens (Human)).